The following is a 218-amino-acid chain: Redox-sensing transcriptional repressor Rex (218 aa).

The H-T-H motif DNA-binding region spans 25–64; sequence WYLSYVQLLHADGCESVSSTRIARAVGVDASLVAKDLSYV. 99–104 serves as a coordination point for NAD(+); the sequence is GVGSLG.

It belongs to the transcriptional regulatory Rex family. As to quaternary structure, homodimer.

It localises to the cytoplasm. Functionally, modulates transcription in response to changes in cellular NADH/NAD(+) redox state. This is Redox-sensing transcriptional repressor Rex from Porphyromonas gingivalis (strain ATCC BAA-308 / W83).